The following is a 346-amino-acid chain: Tyrosine--tRNA ligase (346 aa).

Tyrosine 35 is an L-tyrosine binding site. The short motif at 40–48 (PTGEMHIGH) is the 'HIGH' region element. Positions 162, 166, 169, and 184 each coordinate L-tyrosine.

This sequence belongs to the class-I aminoacyl-tRNA synthetase family. TyrS type 3 subfamily. Homodimer.

Its subcellular location is the cytoplasm. The enzyme catalyses tRNA(Tyr) + L-tyrosine + ATP = L-tyrosyl-tRNA(Tyr) + AMP + diphosphate + H(+). In terms of biological role, catalyzes the attachment of tyrosine to tRNA(Tyr) in a two-step reaction: tyrosine is first activated by ATP to form Tyr-AMP and then transferred to the acceptor end of tRNA(Tyr). This is Tyrosine--tRNA ligase from Haloarcula marismortui (strain ATCC 43049 / DSM 3752 / JCM 8966 / VKM B-1809) (Halobacterium marismortui).